We begin with the raw amino-acid sequence, 245 residues long: Chlorophyll a-b binding protein 1B-21, chloroplastic (245 aa).

Residues 1–44 constitute a chloroplast transit peptide; that stretch reads MASSSGLRSCSAVGVPSLLAPSSRSGRSGLPFCAYATTSGRVTM. Residue Trp-48 coordinates chlorophyll b. Chlorophyll a is bound by residues Phe-68, Glu-87, and His-90. Residue Arg-92 participates in chlorophyll b binding. Residues 93–113 traverse the membrane as a helical segment; the sequence is WAMLCVPGVLVPEALGLGNWV. Leu-129 contacts chlorophyll a. Residues 132 to 152 form a helical membrane-spanning segment; it reads PVPWGNLPTILAIEFLAIAFA. 3 residues coordinate chlorophyll b: Val-133, Glu-153, and Arg-156. 6 residues coordinate chlorophyll a: Lys-190, Glu-191, Asn-194, Arg-196, Gln-208, and His-224.

This sequence belongs to the light-harvesting chlorophyll a/b-binding (LHC) protein family. As to quaternary structure, the LHC complex consists of chlorophyll a-b binding proteins. It depends on Binds at least 14 chlorophylls (8 Chl-a and 6 Chl-b) and carotenoids such as lutein and neoxanthin. as a cofactor. Post-translationally, photoregulated by reversible phosphorylation of its threonine residues.

The protein localises to the plastid. It localises to the chloroplast thylakoid membrane. Functionally, the light-harvesting complex (LHC) functions as a light receptor, it captures and delivers excitation energy to photosystems with which it is closely associated. The chain is Chlorophyll a-b binding protein 1B-21, chloroplastic (LHC Ib-21) from Hordeum vulgare (Barley).